Consider the following 138-residue polypeptide: Growth factor (138 aa).

Residues 1–19 (MSMKYLMLLFAAMIIRSFA) form the signal peptide. N-linked (GlcNAc...) asparagine; by host glycosylation occurs at Asn34. The EGF-like domain occupies 41–81 (AIRLCGPEGDGYCLHGDCIHARDIDGMYCRCSHGYTGIRCQ). Cystine bridges form between Cys45–Cys58, Cys53–Cys69, and Cys71–Cys80. N-linked (GlcNAc...) asparagine; by host glycosylation is present at Asn95.

The protein belongs to the orthopoxvirus OPG019 family.

It is found in the secreted. Stimulates cellular proliferation (hyperplasia)and mobility around infected cells to promote rapid and efficient spread of infection. The chain is Growth factor (OPG019) from Rabbitpox virus (strain Utrecht) (RPV).